The sequence spans 249 residues: Proteasome subunit alpha 2 (249 aa).

Met-1 is modified (N-acetylmethionine).

The protein belongs to the peptidase T1A family. As to quaternary structure, the 20S proteasome core is composed of 14 alpha and 14 beta subunits that assemble into four stacked heptameric rings, resulting in a barrel-shaped structure. The two inner rings, each composed of seven catalytic beta subunits, are sandwiched by two outer rings, each composed of seven alpha subunits. H.volcanii produces at least 2 types of 20S proteasomes: an alpha1-beta proteasome and a proteasome containing all three subunits (alpha1, alpha2, and beta) that appears to be asymmetrical with homo-oligomeric alpha1 and alpha2 rings positioned on separate ends. The catalytic chamber with the active sites is on the inside of the barrel. Has probably a gated structure, the ends of the cylinder being occluded by the N-termini of the alpha-subunits. Is likely capped at one or both ends by the proteasome regulatory ATPase, PAN.

Its subcellular location is the cytoplasm. Its activity is regulated as follows. The formation of the proteasomal ATPase PAN-20S proteasome complex, via the docking of the C-termini of PAN into the intersubunit pockets in the alpha-rings, triggers opening of the gate for substrate entry. Interconversion between the open-gate and close-gate conformations leads to a dynamic regulation of the 20S proteasome proteolysis activity. Its function is as follows. Component of the proteasome core, a large protease complex with broad specificity involved in protein degradation. The H.volcanii alpha1-beta-alpha2 proteasome is able to cleave oligopeptides after Tyr and thus displays chymotrypsin-like activity. This is Proteasome subunit alpha 2 from Haloferax volcanii (strain ATCC 29605 / DSM 3757 / JCM 8879 / NBRC 14742 / NCIMB 2012 / VKM B-1768 / DS2) (Halobacterium volcanii).